The following is a 342-amino-acid chain: Anthranilate phosphoribosyltransferase (342 aa).

5-phospho-alpha-D-ribose 1-diphosphate is bound by residues Gly84, 87–88 (GD), Thr92, 94–97 (NIST), 112–120 (KHGGRSVSS), and Ser124. Gly84 contributes to the anthranilate binding site. Ser96 is a Mg(2+) binding site. Arg170 serves as a coordination point for anthranilate. 2 residues coordinate Mg(2+): Asp229 and Glu230.

Belongs to the anthranilate phosphoribosyltransferase family. As to quaternary structure, homodimer. It depends on Mg(2+) as a cofactor.

It catalyses the reaction N-(5-phospho-beta-D-ribosyl)anthranilate + diphosphate = 5-phospho-alpha-D-ribose 1-diphosphate + anthranilate. It participates in amino-acid biosynthesis; L-tryptophan biosynthesis; L-tryptophan from chorismate: step 2/5. Catalyzes the transfer of the phosphoribosyl group of 5-phosphorylribose-1-pyrophosphate (PRPP) to anthranilate to yield N-(5'-phosphoribosyl)-anthranilate (PRA). The protein is Anthranilate phosphoribosyltransferase of Verminephrobacter eiseniae (strain EF01-2).